We begin with the raw amino-acid sequence, 93 residues long: MSKVCIIAWVHGRVQGVGFRYTTQHEAQRLGLTGYARNLDDGSVEVVACGESEQVDKLMKWLKDGGPRSARVDRVLSEPHRPGEELTGFRIRY.

The region spanning 5 to 93 is the Acylphosphatase-like domain; it reads CIIAWVHGRV…EELTGFRIRY (89 aa). Catalysis depends on residues Arg20 and Asn38.

The protein belongs to the acylphosphatase family.

It catalyses the reaction an acyl phosphate + H2O = a carboxylate + phosphate + H(+). The protein is Acylphosphatase (acyP) of Citrobacter koseri (strain ATCC BAA-895 / CDC 4225-83 / SGSC4696).